The following is a 253-amino-acid chain: 5'/3'-nucleotidase SurE (253 aa).

Asp-8, Asp-9, Ser-39, and Asn-92 together coordinate a divalent metal cation.

Belongs to the SurE nucleotidase family. Requires a divalent metal cation as cofactor.

The protein localises to the cytoplasm. The enzyme catalyses a ribonucleoside 5'-phosphate + H2O = a ribonucleoside + phosphate. The catalysed reaction is a ribonucleoside 3'-phosphate + H2O = a ribonucleoside + phosphate. It carries out the reaction [phosphate](n) + H2O = [phosphate](n-1) + phosphate + H(+). Nucleotidase with a broad substrate specificity as it can dephosphorylate various ribo- and deoxyribonucleoside 5'-monophosphates and ribonucleoside 3'-monophosphates with highest affinity to 3'-AMP. Also hydrolyzes polyphosphate (exopolyphosphatase activity) with the preference for short-chain-length substrates (P20-25). Might be involved in the regulation of dNTP and NTP pools, and in the turnover of 3'-mononucleotides produced by numerous intracellular RNases (T1, T2, and F) during the degradation of various RNAs. The protein is 5'/3'-nucleotidase SurE of Escherichia fergusonii (strain ATCC 35469 / DSM 13698 / CCUG 18766 / IAM 14443 / JCM 21226 / LMG 7866 / NBRC 102419 / NCTC 12128 / CDC 0568-73).